A 157-amino-acid chain; its full sequence is Ribosomal RNA large subunit methyltransferase H (157 aa).

Residues leucine 73, glycine 105, and leucine 124–phenylalanine 129 each bind S-adenosyl-L-methionine.

Belongs to the RNA methyltransferase RlmH family. As to quaternary structure, homodimer.

The protein resides in the cytoplasm. It carries out the reaction pseudouridine(1915) in 23S rRNA + S-adenosyl-L-methionine = N(3)-methylpseudouridine(1915) in 23S rRNA + S-adenosyl-L-homocysteine + H(+). In terms of biological role, specifically methylates the pseudouridine at position 1915 (m3Psi1915) in 23S rRNA. The sequence is that of Ribosomal RNA large subunit methyltransferase H from Porphyromonas gingivalis (strain ATCC 33277 / DSM 20709 / CIP 103683 / JCM 12257 / NCTC 11834 / 2561).